The primary structure comprises 666 residues: MNKTFKYIVLLALACFVGKANAQELKTEVFSLLNLDYPGLEKVKALHQEGKDADAAKALLDYYRARTNVKTPDINLKKVTIGKDEQKMADEALQHTFFAHKGYQPSFNYGEDIDWRYWPVKDNELRWQLHRHKWFTPMGKAYRVSGDEKYAVEWTKQYIDWIKKNPLVKVDKKEYEMTGDNQLKGDVENARFAWRPLEVSNRLQDQTSQFQLFLPSPSFTPEFLTEFLVNYHKHAIHILGIYSAQGNHLLFEAQRMIYAGAFFPEFKEAAAWRKSGIDIMNREINVQVYNDGGQFELDPHYHLAAINIFCKALNIADLYGFRNEFPQEYLDTIEKMIVFYANVSFPDYTNPCFSDAKLTNKKEMLKNYRNWSKMFPKNQFIKYLATDGKEGALPEYLSKGFLKSGFFVFRNSWGTDATQMVVKAGPKAFWHCQPDNGTFELWFNGKNLFPDSGSYVYAGEGEVMEQRNWHRQTCVHNTVTLNNKNLDQTESVTKLWQPEGNVQILVTENPSYKNLKHRRSVFFVDNSYFVIVDEMVGSQKGSINLHYQMPKGEIANSREDMTFVTQFEEGSNMKLQCFGPEGMTMKKEPGWCSTAYRKRYKRMNVSFNVKKDSEDAVRYITVICPIKNSADAPKLSAKFKNKTFNENGLEVEVKVNGKKQSLNYKL.

The N-terminal stretch at 1–22 is a signal peptide; sequence MNKTFKYIVLLALACFVGKANA. Tyr-301 functions as the Proton acceptor in the catalytic mechanism.

The protein belongs to the polysaccharide lyase 12 family.

The protein resides in the periplasm. The catalysed reaction is Elimination of sulfate, appears to act on linkages between N-acetyl-D-glucosamine and uronate. Product is an unsaturated sugar.. Functionally, specifically cleaves heparan sulfate-rich regions of acidic polysaccharides. Also able to degrade heparin and hyaluronic acid. Does not act on N,O-desulfated glucosamine or N-acetyl-O-sulfated glucosamine linkages. Functions in cleaving metazoan heparan sulfate and providing carbon, nitrogen and sulfate sources for microorganisms. In Bacteroides stercoris, this protein is Heparin-sulfate lyase (hepC).